Reading from the N-terminus, the 226-residue chain is ATP synthase F(0) complex subunit a (226 aa).

6 helical membrane-spanning segments follow: residues 12–32, 68–88, 97–117, 138–158, 164–184, and 189–209; these read PTMMGLPIIMLIIMFPSILFP, WTLMLISLITFIGTTNLLGLL, QLSMNLGMAIPLWAGAVVTGF, IPMLIIIQTISLFIQPMALAV, ITAGHLLIHLIGGATLALMSI, and ASITFIILILLTILEFAVALI.

This sequence belongs to the ATPase A chain family. As to quaternary structure, component of the ATP synthase complex composed at least of ATP5F1A/subunit alpha, ATP5F1B/subunit beta, ATP5MC1/subunit c (homooctomer), MT-ATP6/subunit a, MT-ATP8/subunit 8, ATP5ME/subunit e, ATP5MF/subunit f, ATP5MG/subunit g, ATP5MK/subunit k, ATP5MJ/subunit j, ATP5F1C/subunit gamma, ATP5F1D/subunit delta, ATP5F1E/subunit epsilon, ATP5PF/subunit F6, ATP5PB/subunit b, ATP5PD/subunit d, ATP5PO/subunit OSCP. ATP synthase complex consists of a soluble F(1) head domain (subunits alpha(3) and beta(3)) - the catalytic core - and a membrane F(0) domain - the membrane proton channel (subunits c, a, 8, e, f, g, k and j). These two domains are linked by a central stalk (subunits gamma, delta, and epsilon) rotating inside the F1 region and a stationary peripheral stalk (subunits F6, b, d, and OSCP). Interacts with DNAJC30; interaction is direct.

It is found in the mitochondrion inner membrane. The enzyme catalyses H(+)(in) = H(+)(out). Subunit a, of the mitochondrial membrane ATP synthase complex (F(1)F(0) ATP synthase or Complex V) that produces ATP from ADP in the presence of a proton gradient across the membrane which is generated by electron transport complexes of the respiratory chain. ATP synthase complex consist of a soluble F(1) head domain - the catalytic core - and a membrane F(1) domain - the membrane proton channel. These two domains are linked by a central stalk rotating inside the F(1) region and a stationary peripheral stalk. During catalysis, ATP synthesis in the catalytic domain of F(1) is coupled via a rotary mechanism of the central stalk subunits to proton translocation. With the subunit c (ATP5MC1), forms the proton-conducting channel in the F(0) domain, that contains two crucial half-channels (inlet and outlet) that facilitate proton movement from the mitochondrial intermembrane space (IMS) into the matrix. Protons are taken up via the inlet half-channel and released through the outlet half-channel, following a Grotthuss mechanism. This Dasypus novemcinctus (Nine-banded armadillo) protein is ATP synthase F(0) complex subunit a.